Here is a 371-residue protein sequence, read N- to C-terminus: MKMRACKWLLTLAVAFAATLSSAYAASRIKDVASLQAGRDNQLIGYGLVVGLQGTGDSLRSSPFTDQSIRAMLQNLGISTQGGDSRTRNVAAVLVTATLPPFASPGSRLDVTVGSLGDATSLRGGTLVMTSLSGADGQIYAVAQGSVVVSGFNAQGEAAQLNQGVTTAGRVPNGAIIERELPSKFKDGFNLVLQLRNPDFSTAVGMAAAINRYAAAQFGGRIAEALDSQSVLVQKPKMADLARLMADVENLVIETDAPARVVINERTGTIVIGQDVRVAQVAVSYGTLTVQVSETPTIVQPEPFSRGQTAYEPNTTIEAQSDGGTVAILNGSSLRSLVAGLNSIGVKPDGIIAILQSIKSAGALQAELVLQ.

A signal peptide spans 1 to 25 (MKMRACKWLLTLAVAFAATLSSAYA).

Belongs to the FlgI family. In terms of assembly, the basal body constitutes a major portion of the flagellar organelle and consists of four rings (L,P,S, and M) mounted on a central rod.

The protein resides in the periplasm. It localises to the bacterial flagellum basal body. Its function is as follows. Assembles around the rod to form the L-ring and probably protects the motor/basal body from shearing forces during rotation. In Sinorhizobium medicae (strain WSM419) (Ensifer medicae), this protein is Flagellar P-ring protein.